A 194-amino-acid polypeptide reads, in one-letter code: Naphthalene 1,2-dioxygenase system, small oxygenase component (194 aa).

The protein belongs to the bacterial ring-hydroxylating dioxygenase beta subunit family. In terms of assembly, the naphthalene dioxygenase (NDO) multicomponent enzyme system is composed of an electron transfer component and a dioxygenase component (iron sulfur protein (ISP)). The electron transfer component is composed of a ferredoxin reductase (NagAa) and a ferredoxin (NagAb), and the dioxygenase component is formed by a large alpha subunit (NagAc) and a small beta subunit (NagAd).

It functions in the pathway aromatic compound metabolism; naphthalene degradation. Functionally, component of the naphthalene dioxygenase (NDO) multicomponent enzyme system which catalyzes the incorporation of both atoms of molecular oxygen into naphthalene to form cis-(1R,2S)-dihydroxy-1,2-dihydronaphthalene. Also able to use styrene as substrate. The beta subunit seems to have a structural role in the holoenzyme. This chain is Naphthalene 1,2-dioxygenase system, small oxygenase component, found in Ralstonia sp.